Here is a 774-residue protein sequence, read N- to C-terminus: Lysyl oxidase homolog 2 (774 aa).

The N-terminal stretch at 1–25 (MERPLCSHLCSCLAMLALLSPLSLA) is a signal peptide. 4 consecutive SRCR domains span residues 58–159 (LRLA…VVCS), 188–302 (IRAI…VSCV), 326–425 (VRLR…VRCN), and 435–544 (LRLN…VACS). 9 cysteine pairs are disulfide-bonded: Cys84-Cys148, Cys97-Cys158, Cys128-Cys138, Cys218-Cys291, Cys231-Cys301, Cys265-Cys275, Cys351-Cys414, Cys364-Cys424, and Cys395-Cys405. Asn288 carries N-linked (GlcNAc...) asparagine glycosylation. Residue Asn455 is glycosylated (N-linked (GlcNAc...) (complex) asparagine). Cystine bridges form between Cys464/Cys530, Cys477/Cys543, and Cys511/Cys521. The tract at residues 548–751 (PDLVLNAEMV…WMYNCHIGGS (204 aa)) is lysyl-oxidase like. Residues Asp549 and Leu550 each coordinate Ca(2+). Intrachain disulfides connect Cys573–Cys625, Cys579–Cys695, Cys657–Cys673, and Cys663–Cys685. Residues His626, His628, and His630 each coordinate Cu cation. The N-linked (GlcNAc...) (complex) asparagine glycan is linked to Asn644. The segment at residues 653 to 689 (KASFCLEDTECEGDIQKNYECANFGDQGITMGCWDMY) is a cross-link (lysine tyrosylquinone (Lys-Tyr)). Residue Tyr689 is modified to 2',4',5'-topaquinone. Ca(2+)-binding residues include Glu722, Asp724, Asn727, and Asn728. Residues Cys732 and Cys746 are joined by a disulfide bond.

It belongs to the lysyl oxidase family. In terms of assembly, component of some chromatin repressor complex. Interacts with SNAI1. Interacts with TAF10. Interacts with HSPA5. Interacts with EFEMP2. Cu cation is required as a cofactor. The cofactor is lysine tyrosylquinone residue. The lysine tyrosylquinone cross-link (LTQ) is generated by condensation of the epsilon-amino group of a lysine with a topaquinone produced by oxidation of tyrosine. In terms of processing, N-glycosylated. N-glycosylation on Asn-455 and Asn-644 may be essential for proper folding and secretion; may be composed of a fucosylated carbohydrates attached to a trimannose N-linked glycan core. As to expression, expressed in many tissues. Highest expression in reproductive tissues, placenta, uterus and prostate. In esophageal epithelium, expressed in the basal, prickle and granular cell layers. Up-regulated in a number of cancers cells and tissues.

It is found in the secreted. The protein localises to the extracellular space. Its subcellular location is the extracellular matrix. The protein resides in the basement membrane. It localises to the nucleus. It is found in the chromosome. The protein localises to the endoplasmic reticulum. The catalysed reaction is L-lysyl-[protein] + O2 + H2O = (S)-2-amino-6-oxohexanoyl-[protein] + H2O2 + NH4(+). Its activity is regulated as follows. According to some reports, it is inhibited by beta-aminopropionitrile (BAPN). According to another report, it is not inhibited by beta-aminopropionitrile (BAPN). Specifically inhibited by a mouse monoclonal antibody AB0023, inhibition occurs in a non-competitive manner. In terms of biological role, mediates the post-translational oxidative deamination of lysine residues on target proteins leading to the formation of deaminated lysine (allysine). Acts as a transcription corepressor and specifically mediates deamination of trimethylated 'Lys-4' of histone H3 (H3K4me3), a specific tag for epigenetic transcriptional activation. Shows no activity against histone H3 when it is trimethylated on 'Lys-9' (H3K9me3) or 'Lys-27' (H3K27me3) or when 'Lys-4' is monomethylated (H3K4me1) or dimethylated (H3K4me2). Also mediates deamination of methylated TAF10, a member of the transcription factor IID (TFIID) complex, which induces release of TAF10 from promoters, leading to inhibition of TFIID-dependent transcription. LOXL2-mediated deamination of TAF10 results in transcriptional repression of genes required for embryonic stem cell pluripotency including POU5F1/OCT4, NANOG, KLF4 and SOX2. Involved in epithelial to mesenchymal transition (EMT) via interaction with SNAI1 and participates in repression of E-cadherin CDH1, probably by mediating deamination of histone H3. During EMT, involved with SNAI1 in negatively regulating pericentromeric heterochromatin transcription. SNAI1 recruits LOXL2 to pericentromeric regions to oxidize histone H3 and repress transcription which leads to release of heterochromatin component CBX5/HP1A, enabling chromatin reorganization and acquisition of mesenchymal traits. Interacts with the endoplasmic reticulum protein HSPA5 which activates the IRE1-XBP1 pathway of the unfolded protein response, leading to expression of several transcription factors involved in EMT and subsequent EMT induction. Involved in E-cadherin repression following hypoxia, a hallmark of EMT believed to amplify tumor aggressiveness, suggesting that it may play a role in tumor progression. When secreted into the extracellular matrix, promotes cross-linking of extracellular matrix proteins by mediating oxidative deamination of peptidyl lysine residues in precursors to fibrous collagen and elastin. Acts as a regulator of sprouting angiogenesis, probably via collagen IV scaffolding. Acts as a regulator of chondrocyte differentiation, probably by regulating expression of factors that control chondrocyte differentiation. This chain is Lysyl oxidase homolog 2 (LOXL2), found in Homo sapiens (Human).